A 73-amino-acid polypeptide reads, in one-letter code: uncharacterized protein (73 aa).

This is an uncharacterized protein from Homo sapiens (Human).